The primary structure comprises 204 residues: Thymidylate kinase (204 aa).

11–18 lines the ATP pocket; the sequence is GLDKSGKT.

This sequence belongs to the thymidylate kinase family.

The catalysed reaction is dTMP + ATP = dTDP + ADP. The protein operates within pyrimidine metabolism; dTTP biosynthesis. The sequence is that of Thymidylate kinase (TMK) from Rabbitpox virus (strain Utrecht) (RPV).